The primary structure comprises 167 residues: Ubiquitin-fold modifier-conjugating enzyme 1 (167 aa).

The Glycyl thioester intermediate role is filled by Cys-116.

The protein belongs to the ubiquitin-conjugating enzyme family. UFC1 subfamily. In terms of assembly, interacts with UBA5 (via C-terminus). Interacts with UFL1. Interacts with UFM1.

Functionally, E2-like enzyme which specifically catalyzes the second step in ufmylation. Accepts the ubiquitin-like modifier UFM1 from the E1 enzyme UBA5 and forms an intermediate with UFM1 via a thioester linkage. Ufmylation is involved in various processes, such as ribosome recycling, response to DNA damage, interferon response or reticulophagy (also called ER-phagy). In Esox lucius (Northern pike), this protein is Ubiquitin-fold modifier-conjugating enzyme 1.